Consider the following 130-residue polypeptide: WAP four-disulfide core domain protein 3 (130 aa).

The first 16 residues, 1–16 (MKALLALGFLASWVAA), serve as a signal peptide directing secretion. WAP domains lie at 17-61 (GEHA…RGDI) and 62-106 (EGGR…IPGL). 8 disulfide bridges follow: C25–C49, C32–C53, C36–C48, C42–C57, C69–C94, C77–C98, C81–C93, and C87–C102. N-linked (GlcNAc...) asparagine glycosylation occurs at N116.

It localises to the secreted. The chain is WAP four-disulfide core domain protein 3 (Wfdc3) from Mus musculus (Mouse).